We begin with the raw amino-acid sequence, 114 residues long: Fluoride-specific ion channel FluC 1 (114 aa).

The next 4 helical transmembrane spans lie at 3-23 (IDIK…GALF), 30-50 (IFIV…LNIL), 55-75 (LTLC…MSHL), and 87-107 (FLLN…LGHI). Positions 63 and 66 each coordinate Na(+).

This sequence belongs to the fluoride channel Fluc/FEX (TC 1.A.43) family.

The protein localises to the cell inner membrane. The enzyme catalyses fluoride(in) = fluoride(out). With respect to regulation, na(+) is not transported, but it plays an essential structural role and its presence is essential for fluoride channel function. In terms of biological role, fluoride-specific ion channel. Important for reducing fluoride concentration in the cell, thus reducing its toxicity. This chain is Fluoride-specific ion channel FluC 1, found in Prochlorococcus marinus (strain NATL2A).